The sequence spans 245 residues: Orotidine 5'-phosphate decarboxylase (245 aa).

Substrate-binding positions include D22, K44, 71 to 80 (DLKFHDIPNT), T131, R192, Q201, G221, and R222. Catalysis depends on K73, which acts as the Proton donor.

Belongs to the OMP decarboxylase family. Type 1 subfamily. As to quaternary structure, homodimer.

The catalysed reaction is orotidine 5'-phosphate + H(+) = UMP + CO2. The protein operates within pyrimidine metabolism; UMP biosynthesis via de novo pathway; UMP from orotate: step 2/2. Its function is as follows. Catalyzes the decarboxylation of orotidine 5'-monophosphate (OMP) to uridine 5'-monophosphate (UMP). This is Orotidine 5'-phosphate decarboxylase from Escherichia fergusonii (strain ATCC 35469 / DSM 13698 / CCUG 18766 / IAM 14443 / JCM 21226 / LMG 7866 / NBRC 102419 / NCTC 12128 / CDC 0568-73).